Reading from the N-terminus, the 610-residue chain is E-selectin (610 aa).

Residues 1–21 form the signal peptide; sequence MIASQFLSALTLVLLIKESGA. In terms of domain architecture, C-type lectin spans 22 to 139; that stretch reads WSYNTSTEAM…CSKKKLALCY (118 aa). The Extracellular segment spans residues 22–556; that stretch reads WSYNTSTEAM…CEAPTESNIP (535 aa). An N-linked (GlcNAc...) asparagine glycan is attached at Asn-25. 5 cysteine pairs are disulfide-bonded: Cys-40/Cys-138, Cys-111/Cys-130, Cys-143/Cys-154, Cys-148/Cys-163, and Cys-165/Cys-174. Positions 101, 103, and 109 each coordinate Ca(2+). Residues 101 to 109, 113 to 118, and 126 to 128 each bind a carbohydrate; these read EPNNRQKDE, EIYIKR, and NDE. Ca(2+) contacts are provided by Asn-126 and Asp-127. The 36-residue stretch at 140 to 175 folds into the EGF-like domain; sequence TAACTNTSCSGHGECVETINNYTCKCDPGFSGLKCE. 2 N-linked (GlcNAc...) asparagine glycosylation sites follow: Asn-145 and Asn-160. 6 consecutive Sushi domains span residues 178–239, 240–301, 303–364, 366–427, 429–490, and 491–549; these read VNCT…ACNV, VECD…TCKA, TCRA…VCEA, QCTA…TCEA, RCDA…SCQV, and VKCS…TCEA. Residues Asn-179, Asn-199, and Asn-203 are each glycosylated (N-linked (GlcNAc...) asparagine). Intrachain disulfides connect Cys-180–Cys-224, Cys-193–Cys-206, Cys-210–Cys-237, Cys-242–Cys-286, Cys-255–Cys-268, Cys-272–Cys-299, Cys-304–Cys-349, Cys-335–Cys-362, Cys-367–Cys-412, Cys-398–Cys-425, Cys-430–Cys-475, Cys-461–Cys-488, Cys-493–Cys-534, and Cys-520–Cys-547. N-linked (GlcNAc...) asparagine glycosylation occurs at Asn-265. N-linked (GlcNAc...) asparagine glycosylation is found at Asn-312 and Asn-332. Residues Asn-503 and Asn-527 are each glycosylated (N-linked (GlcNAc...) asparagine). Residues 557-578 traverse the membrane as a helical segment; the sequence is LVAGLSAAGLSLLTLAPFLLWL. At 579–610 the chain is on the cytoplasmic side; the sequence is RKCLRKAKKFVPASSCQSLESDGSYQKPSYIL.

It belongs to the selectin/LECAM family. As to quaternary structure, interacts with SELPLG/PSGL1 and PODXL2 through the sialyl Lewis X epitope. SELPLG sulfation appears not to be required for this interaction.

The protein resides in the cell membrane. In terms of biological role, cell-surface glycoprotein having a role in immunoadhesion. Mediates in the adhesion of blood neutrophils in cytokine-activated endothelium through interaction with SELPLG/PSGL1. May have a role in capillary morphogenesis. This chain is E-selectin (SELE), found in Homo sapiens (Human).